A 119-amino-acid polypeptide reads, in one-letter code: Methylglyoxal synthase (119 aa).

Residues 1–119 enclose the MGS-like domain; it reads MKIALIAHDK…ESAKLIMADI (119 aa). Substrate is bound by residues His-8, Lys-12, 34-37, and 54-55; these read TGTT and SG. Catalysis depends on Asp-60, which acts as the Proton donor/acceptor. His-87 is a binding site for substrate.

It belongs to the methylglyoxal synthase family.

The catalysed reaction is dihydroxyacetone phosphate = methylglyoxal + phosphate. Catalyzes the formation of methylglyoxal from dihydroxyacetone phosphate. This chain is Methylglyoxal synthase, found in Clostridium perfringens (strain ATCC 13124 / DSM 756 / JCM 1290 / NCIMB 6125 / NCTC 8237 / Type A).